Consider the following 194-residue polypeptide: Peptidyl-tRNA hydrolase (194 aa).

Position 17 (tyrosine 17) interacts with tRNA. Residue histidine 22 is the Proton acceptor of the active site. Tyrosine 68, asparagine 70, and asparagine 116 together coordinate tRNA.

This sequence belongs to the PTH family. As to quaternary structure, monomer.

Its subcellular location is the cytoplasm. It carries out the reaction an N-acyl-L-alpha-aminoacyl-tRNA + H2O = an N-acyl-L-amino acid + a tRNA + H(+). In terms of biological role, hydrolyzes ribosome-free peptidyl-tRNAs (with 1 or more amino acids incorporated), which drop off the ribosome during protein synthesis, or as a result of ribosome stalling. Catalyzes the release of premature peptidyl moieties from peptidyl-tRNA molecules trapped in stalled 50S ribosomal subunits, and thus maintains levels of free tRNAs and 50S ribosomes. This Azotobacter vinelandii (strain DJ / ATCC BAA-1303) protein is Peptidyl-tRNA hydrolase.